A 262-amino-acid chain; its full sequence is MLSNLVVTKQKVVLVIDELNRERIAPKFIGSLLHEQGQGADTIKALPTGVSLKHVATFEALIDKYANNNTGSTTDSNSTGFNVILPTLADLLCYQTPAFIFGFLNRLRRSDNVRRVFLWASPQHLQDPHADYILAGCEYLAELVLRLESDKLLSLISRKPGGGVSNRRYSCEVSKTQFKVTPLDGGLPAGASPKQPSPEAEQTTEPASSTFKIELDEDEVLARNALTLPYERTSEPSEGNIIYTPDADDDFDEEDPDEDLCI.

Disordered regions lie at residues 181 to 214 (TPLDGGLPAGASPKQPSPEAEQTTEPASSTFKIE) and 229 to 262 (PYERTSEPSEGNIIYTPDADDDFDEEDPDEDLCI). Positions 200–211 (AEQTTEPASSTF) are enriched in polar residues. Over residues 246–262 (DADDDFDEEDPDEDLCI) the composition is skewed to acidic residues.

It belongs to the ELP5 family. Component of the elongator complex composed of Elp1, Elp2, Elp3, Elp4, Elp5 and Elp6. The elongator complex associates with and stabilizes microtubules; efficient interaction requires the full complex.

Its subcellular location is the cytoplasm. It is found in the nucleus. The protein localises to the cytoskeleton. It localises to the spindle. The protein operates within tRNA modification; 5-methoxycarbonylmethyl-2-thiouridine-tRNA biosynthesis. Functionally, component of the elongator complex, which is required for multiple tRNA modifications, including mcm5U (5-methoxycarbonylmethyl uridine), mcm5s2U (5-methoxycarbonylmethyl-2-thiouridine), and ncm5U (5-carbamoylmethyl uridine). The elongator complex catalyzes the formation of carboxymethyluridine in the wobble base at position 34 in tRNAs. Binding by the elongator complex stabilizes microtubules and promotes their growth. This induces central spindle asymmetry, promoting polarized signaling endosome trafficking during asymmetric cell division and cell fate assignation of sensory organ precursor cells. The sequence is that of Elongator complex protein 5 from Drosophila melanogaster (Fruit fly).